The primary structure comprises 228 residues: Deoxyribose-phosphate aldolase (228 aa).

Asp-96 acts as the Proton donor/acceptor in catalysis. Residue Lys-157 is the Schiff-base intermediate with acetaldehyde of the active site. Lys-185 (proton donor/acceptor) is an active-site residue.

Belongs to the DeoC/FbaB aldolase family. DeoC type 1 subfamily.

It is found in the cytoplasm. The catalysed reaction is 2-deoxy-D-ribose 5-phosphate = D-glyceraldehyde 3-phosphate + acetaldehyde. It participates in carbohydrate degradation; 2-deoxy-D-ribose 1-phosphate degradation; D-glyceraldehyde 3-phosphate and acetaldehyde from 2-deoxy-alpha-D-ribose 1-phosphate: step 2/2. Functionally, catalyzes a reversible aldol reaction between acetaldehyde and D-glyceraldehyde 3-phosphate to generate 2-deoxy-D-ribose 5-phosphate. The protein is Deoxyribose-phosphate aldolase of Cyanothece sp. (strain PCC 7425 / ATCC 29141).